Here is a 425-residue protein sequence, read N- to C-terminus: Dihydroorotase (425 aa).

H56 and H58 together coordinate Zn(2+). Substrate-binding positions include 58 to 60 (HYR) and N90. Residues D148, H175, and H228 each coordinate Zn(2+). N274 provides a ligand contact to substrate. D301 contacts Zn(2+). Residue D301 is part of the active site. Residues H305 and 319–320 (FG) contribute to the substrate site.

Belongs to the metallo-dependent hydrolases superfamily. DHOase family. Class I DHOase subfamily. Requires Zn(2+) as cofactor.

It carries out the reaction (S)-dihydroorotate + H2O = N-carbamoyl-L-aspartate + H(+). The protein operates within pyrimidine metabolism; UMP biosynthesis via de novo pathway; (S)-dihydroorotate from bicarbonate: step 3/3. Catalyzes the reversible cyclization of carbamoyl aspartate to dihydroorotate. In Lactobacillus acidophilus (strain ATCC 700396 / NCK56 / N2 / NCFM), this protein is Dihydroorotase.